Reading from the N-terminus, the 1412-residue chain is ABC transporter C family member 3 (1412 aa).

Residues methionine 1–lysine 34 form a disordered region. Over residues lysine 21–lysine 34 the composition is skewed to basic residues. 6 helical membrane passes run phenylalanine 115–valine 135, methionine 161–tyrosine 181, valine 236–leucine 256, isoleucine 261–isoleucine 281, alanine 346–serine 366, and isoleucine 379–isoleucine 399. In terms of domain architecture, ABC transmembrane type-1 1 spans phenylalanine 119 to glutamine 405. One can recognise an ABC transporter 1 domain in the interval isoleucine 439 to alanine 662. Glycine 474–serine 481 is a binding site for ATP. 5 consecutive transmembrane segments (helical) span residues tryptophan 724–methionine 744, isoleucine 787–phenylalanine 807, asparagine 854–leucine 874, isoleucine 875–phenylalanine 895, and tryptophan 967–isoleucine 987. In terms of domain architecture, ABC transmembrane type-1 2 spans phenylalanine 735 to threonine 1025. The region spanning isoleucine 1062–glutamate 1296 is the ABC transporter 2 domain. Position 1096–1103 (glycine 1096–serine 1103) interacts with ATP. Residues glycine 1316–asparagine 1412 are disordered. Over residues asparagine 1342–leucine 1351 the composition is skewed to polar residues. Residues aspartate 1367–aspartate 1397 show a composition bias toward low complexity. Residues asparagine 1398 to asparagine 1412 are compositionally biased toward acidic residues.

This sequence belongs to the ABC transporter superfamily. ABCC family. Conjugate transporter (TC 3.A.1.208) subfamily.

It localises to the membrane. The chain is ABC transporter C family member 3 (abcC3) from Dictyostelium discoideum (Social amoeba).